A 266-amino-acid polypeptide reads, in one-letter code: Tryptophan synthase alpha chain (266 aa).

Active-site proton acceptor residues include Glu51 and Asp62.

It belongs to the TrpA family. In terms of assembly, tetramer of two alpha and two beta chains.

It carries out the reaction (1S,2R)-1-C-(indol-3-yl)glycerol 3-phosphate + L-serine = D-glyceraldehyde 3-phosphate + L-tryptophan + H2O. It functions in the pathway amino-acid biosynthesis; L-tryptophan biosynthesis; L-tryptophan from chorismate: step 5/5. In terms of biological role, the alpha subunit is responsible for the aldol cleavage of indoleglycerol phosphate to indole and glyceraldehyde 3-phosphate. This is Tryptophan synthase alpha chain from Prochlorococcus marinus (strain NATL1A).